The following is a 619-amino-acid chain: Cationic amino acid transporter 3 (619 aa).

Residues 1-36 (MLWQALRRFGQKLVRRRLLELGMGETRLARCLSTLD) lie on the Cytoplasmic side of the membrane. Residues 37–57 (LVALGVGSTLGAGVYVLAGEV) traverse the membrane as a helical segment. The Extracellular portion of the chain corresponds to 58–61 (AKEK). Residues 62–82 (AGPSIVICFLVAALSSVLAGL) traverse the membrane as a helical segment. Over 83–107 (CYAEFGARVPGSGSAYLYSYVTVGE) the chain is Cytoplasmic. Residues 108–128 (LWAFTTGWNLILSYVIGTASV) form a helical membrane-spanning segment. Topologically, residues 129–162 (ARAWSSAFDNLIGNHISQTLKGTILLNMPHVLAE) are extracellular. The chain crosses the membrane as a helical span at residues 163-183 (YPDFFALALVLLLTGLLVLGA). Residues 184 to 191 (NESGLVTK) lie on the Cytoplasmic side of the membrane. The chain crosses the membrane as a helical span at residues 192–212 (VFTGMNLLVLGFVIISGFIKG). Over 213–244 (ELRNWKLTKEDYCLTMSESNGTCSLDSMGSGG) the chain is Extracellular. Asn232 carries N-linked (GlcNAc...) asparagine glycosylation. A helical transmembrane segment spans residues 245–265 (FMPFGLEGILRGAATCFYAFV). Residues 266–285 (GFDCIATTGEEAQNPQRSIP) lie on the Cytoplasmic side of the membrane. Residues 286–306 (MGIVISLSICFLAYFGVSSAL) form a helical membrane-spanning segment. The Extracellular portion of the chain corresponds to 307-335 (TLMMPYYKLQPESPLPEAFTYVGWEPARY). Residues 336-356 (LVAIGSLCALSTSLLGSMFPM) traverse the membrane as a helical segment. Over 357 to 382 (PRVIYAMAEDGLLFRVLARVHNGTHT) the chain is Cytoplasmic. A helical transmembrane segment spans residues 383–403 (PIVATVVSGVIAAFMAFLFEL). Over 404–406 (TDL) the chain is Extracellular. Residues 407–427 (VDLMSIGTLLAYSLVSICVLI) form a helical membrane-spanning segment. Residues 428-475 (LRYQPDQEMKNGEEEVELQEERTLEAEKLTVQALFCQVDSIPTLLSGR) lie on the Cytoplasmic side of the membrane. The helical transmembrane segment at 476-496 (IVYVCSSLLAVLLTVLCLVLT) threads the bilayer. Over 497 to 507 (WWTTPLHSGDP) the chain is Extracellular. A helical membrane pass occupies residues 508 to 528 (VWVTVVVLILGLILGISGVIW). The Cytoplasmic portion of the chain corresponds to 529–540 (RQPQNRTPLHFK). The chain crosses the membrane as a helical span at residues 541-561 (VPVVPLLPLVSIFVNVYLMMQ). Residues 562–569 (MTADTWAR) are Extracellular-facing. A helical membrane pass occupies residues 570 to 590 (FGVWMLIGFAIYFGYGIQHSV). At 591–619 (EEVKNHQTLPKTRPQTIDLDLTTSCVHSI) the chain is on the cytoplasmic side. Thr606 is subject to Phosphothreonine. Ser618 carries the phosphoserine modification.

This sequence belongs to the amino acid-polyamine-organocation (APC) superfamily. Cationic amino acid transporter (CAT) (TC 2.A.3.3) family. In terms of processing, N-glycosylated. In terms of tissue distribution, highly expressed in brain.

It localises to the cell membrane. It carries out the reaction L-arginine(in) = L-arginine(out). The catalysed reaction is L-lysine(in) = L-lysine(out). The enzyme catalyses L-ornithine(in) = L-ornithine(out). Its activity is regulated as follows. Inhibited by high potassium ions-induced membrane depolarization. Its function is as follows. Uniporter that mediates the uptake of cationic L-amino acids such as L-arginine, L-lysine and L-ornithine. The transport is sodium ions- and pH-independent, moderately trans-stimulated and is mediated by passive diffusion. This Rattus norvegicus (Rat) protein is Cationic amino acid transporter 3.